Consider the following 229-residue polypeptide: Small ribosomal subunit protein uS3 (229 aa).

One can recognise a KH type-2 domain in the interval 39–107 (VRQYLTEKLK…TAQINIAEIR (69 aa)).

This sequence belongs to the universal ribosomal protein uS3 family. Part of the 30S ribosomal subunit. Forms a tight complex with proteins S10 and S14.

Functionally, binds the lower part of the 30S subunit head. Binds mRNA in the 70S ribosome, positioning it for translation. The sequence is that of Small ribosomal subunit protein uS3 from Shewanella frigidimarina (strain NCIMB 400).